The following is a 146-amino-acid chain: Hemoglobin subunit beta (146 aa).

Residues 2–146 form the Globin domain; the sequence is HWSAEEKQLI…VAHALARKYH (145 aa). Positions 63 and 92 each coordinate heme b.

This sequence belongs to the globin family. As to quaternary structure, heterotetramer of two alpha chains and two beta chains. As to expression, red blood cells.

In terms of biological role, involved in oxygen transport from the lung to the various peripheral tissues. This Psittacula krameri (Rose-ringed parakeet) protein is Hemoglobin subunit beta (HBB).